Consider the following 200-residue polypeptide: Membrane-spanning 4-domains subfamily A member 5 (200 aa).

Residues 1 to 52 (MDSSTAHSPVFLVFPPEITASEYESTELSATTFSTQSPLQKLFARKMKILGT) lie on the Cytoplasmic side of the membrane. A helical transmembrane segment spans residues 53–73 (IQILFGIMTFSFGVIFLFTLL). Residues 74 to 80 (KPYPRFP) are Extracellular-facing. Residues 81 to 101 (FIFLSGYPFWGSVLFINSGAF) traverse the membrane as a helical segment. The Cytoplasmic segment spans residues 102–120 (LIAVKRKTTETLIILSRIM). The chain crosses the membrane as a helical span at residues 121–141 (NFLSALGAIAGIILLTFGFIL). At 142–159 (DQNYICGYSHQNSQCKAV) the chain is on the extracellular side. The chain crosses the membrane as a helical span at residues 160–180 (TVLFLGILITLMTFSIIELFI). The Cytoplasmic segment spans residues 181-200 (SLPFSILGCHSEDCDCEQCC).

It belongs to the MS4A family. Expressed at high level in the testis. Detected also in the pancreas, heart and in the brain.

It is found in the membrane. Its function is as follows. May be involved in signal transduction as a component of a multimeric receptor complex. The polypeptide is Membrane-spanning 4-domains subfamily A member 5 (MS4A5) (Homo sapiens (Human)).